The primary structure comprises 546 residues: Chaperonin GroEL (546 aa).

Residues 30 to 33 (TLGP), Lys51, 87 to 91 (DGTTT), Gly415, and Asp496 each bind ATP. A disordered region spans residues 526-546 (PQKDAPAGGGMPDMGGMGGMM). Positions 532 to 546 (AGGGMPDMGGMGGMM) are enriched in gly residues.

This sequence belongs to the chaperonin (HSP60) family. In terms of assembly, forms a cylinder of 14 subunits composed of two heptameric rings stacked back-to-back. Interacts with the co-chaperonin GroES.

The protein resides in the cytoplasm. The enzyme catalyses ATP + H2O + a folded polypeptide = ADP + phosphate + an unfolded polypeptide.. Together with its co-chaperonin GroES, plays an essential role in assisting protein folding. The GroEL-GroES system forms a nano-cage that allows encapsulation of the non-native substrate proteins and provides a physical environment optimized to promote and accelerate protein folding. This chain is Chaperonin GroEL, found in Ruegeria pomeroyi (strain ATCC 700808 / DSM 15171 / DSS-3) (Silicibacter pomeroyi).